The sequence spans 90 residues: Probable Fe(2+)-trafficking protein (90 aa).

This sequence belongs to the Fe(2+)-trafficking protein family. In terms of assembly, monomer.

Functionally, could be a mediator in iron transactions between iron acquisition and iron-requiring processes, such as synthesis and/or repair of Fe-S clusters in biosynthetic enzymes. In Serratia proteamaculans (strain 568), this protein is Probable Fe(2+)-trafficking protein.